The following is a 515-amino-acid chain: Maturase K (515 aa).

The protein belongs to the intron maturase 2 family. MatK subfamily.

It localises to the plastid. The protein localises to the chloroplast. Functionally, usually encoded in the trnK tRNA gene intron. Probably assists in splicing its own and other chloroplast group II introns. The polypeptide is Maturase K (Pinus tabuliformis (Chinese red pine)).